The following is a 330-amino-acid chain: Aspartate--ammonia ligase (330 aa).

It belongs to the class-II aminoacyl-tRNA synthetase family. AsnA subfamily.

The protein localises to the cytoplasm. It carries out the reaction L-aspartate + NH4(+) + ATP = L-asparagine + AMP + diphosphate + H(+). Its pathway is amino-acid biosynthesis; L-asparagine biosynthesis; L-asparagine from L-aspartate (ammonia route): step 1/1. The sequence is that of Aspartate--ammonia ligase from Salmonella schwarzengrund (strain CVM19633).